A 211-amino-acid chain; its full sequence is Ribonuclease T (211 aa).

Residues 24 to 198 (VVVDVETGGF…YDAEKTAHLF (175 aa)) form the Exonuclease domain. The Mg(2+) site is built by Asp-27, Glu-29, His-185, and Asp-190. The Proton donor/acceptor role is filled by His-185.

The protein belongs to the RNase T family. In terms of assembly, homodimer. Mg(2+) is required as a cofactor.

In terms of biological role, trims short 3' overhangs of a variety of RNA species, leaving a one or two nucleotide 3' overhang. Responsible for the end-turnover of tRNA: specifically removes the terminal AMP residue from uncharged tRNA (tRNA-C-C-A). Also appears to be involved in tRNA biosynthesis. This chain is Ribonuclease T, found in Xylella fastidiosa (strain 9a5c).